Consider the following 720-residue polypeptide: Phosphate acetyltransferase (720 aa).

Residues 389–720 (AFRHELVQKS…LEAKAAALAS (332 aa)) are phosphate acetyltransferase.

The protein in the N-terminal section; belongs to the CobB/CobQ family. This sequence in the C-terminal section; belongs to the phosphate acetyltransferase and butyryltransferase family. In terms of assembly, homohexamer.

Its subcellular location is the cytoplasm. It carries out the reaction acetyl-CoA + phosphate = acetyl phosphate + CoA. Its pathway is metabolic intermediate biosynthesis; acetyl-CoA biosynthesis; acetyl-CoA from acetate: step 2/2. Functionally, involved in acetate metabolism. This chain is Phosphate acetyltransferase (pta), found in Acinetobacter baylyi (strain ATCC 33305 / BD413 / ADP1).